Consider the following 206-residue polypeptide: Small ribosomal subunit protein eS1 (206 aa).

This sequence belongs to the eukaryotic ribosomal protein eS1 family.

This Halobacterium salinarum (strain ATCC 29341 / DSM 671 / R1) protein is Small ribosomal subunit protein eS1.